The chain runs to 154 residues: Interleukin-7 (154 aa).

The signal sequence occupies residues methionine 1–serine 25. 3 cysteine pairs are disulfide-bonded: cysteine 27–cysteine 145, cysteine 58–cysteine 133, and cysteine 71–cysteine 116. Residues asparagine 94 and asparagine 115 are each glycosylated (N-linked (GlcNAc...) asparagine).

Belongs to the IL-7/IL-9 family. As to quaternary structure, interacts with IL7R and CSF2RG. Three disulfide bonds are present.

The protein localises to the secreted. Hematopoietic cytokine that plays an essential role in the development, expansion, and survival of naive and memory T-cells and B-cells thereby regulating the number of mature lymphocytes and maintaining lymphoid homeostasis. Mechanistically, exerts its biological effects through a receptor composed of IL7RA subunit and the cytokine receptor common subunit gamma/CSF2RG. Binding to the receptor leads to activation of various kinases including JAK1 or JAK3 depending on the cell type and subsequently propagation of signals through activation of several downstream signaling pathways including the PI3K/Akt/mTOR or the JAK-STAT5. This Rattus norvegicus (Rat) protein is Interleukin-7 (Il7).